The sequence spans 80 residues: Conotoxin Cl9.5 (80 aa).

Residues 1 to 23 (MNCYLILTVALLLTSAMTGTTTA) form the signal peptide. Residues 24–37 (GQLNTKGVTLREDD) constitute a propeptide that is removed on maturation. Intrachain disulfides connect C42–C59, C47–C69, and C49–C74.

As to expression, expressed by the venom duct.

The protein localises to the secreted. In Californiconus californicus (California cone), this protein is Conotoxin Cl9.5.